A 163-amino-acid chain; its full sequence is Cyclic pyranopterin monophosphate synthase (163 aa).

Substrate-binding positions include 75–77 and 115–116; these read MCH and ME. Asp-130 is an active-site residue.

The protein belongs to the MoaC family. Homohexamer; trimer of dimers.

It carries out the reaction (8S)-3',8-cyclo-7,8-dihydroguanosine 5'-triphosphate = cyclic pyranopterin phosphate + diphosphate. The protein operates within cofactor biosynthesis; molybdopterin biosynthesis. Functionally, catalyzes the conversion of (8S)-3',8-cyclo-7,8-dihydroguanosine 5'-triphosphate to cyclic pyranopterin monophosphate (cPMP). The chain is Cyclic pyranopterin monophosphate synthase from Bacillus pumilus (strain SAFR-032).